A 175-amino-acid chain; its full sequence is MMTYFVFILSTVFVIGFVGFSSKPSPVYGGVGLIISGGVGCGIVMNFSGSFLGLMVFLIYLGGMMVVFGYTAAMAMELYPEVWISNKVVLGAFVSGLFMEMLLVLYVLKEGSVGSMFEFSSLGDWVVYDVEDSGFFSKEVVGISSLYSYGVWLVVVTGWSLFIAVVVIMEVTRGG.

Helical transmembrane passes span 1–21 (MMTY…VGFS), 27–47 (VYGG…VMNF), 49–69 (GSFL…VVFG), 88–108 (VVLG…LYVL), and 149–169 (YGVW…VVIM).

This sequence belongs to the complex I subunit 6 family. Core subunit of respiratory chain NADH dehydrogenase (Complex I) which is composed of 45 different subunits.

The protein resides in the mitochondrion inner membrane. The enzyme catalyses a ubiquinone + NADH + 5 H(+)(in) = a ubiquinol + NAD(+) + 4 H(+)(out). Core subunit of the mitochondrial membrane respiratory chain NADH dehydrogenase (Complex I) which catalyzes electron transfer from NADH through the respiratory chain, using ubiquinone as an electron acceptor. Essential for the catalytic activity and assembly of complex I. The sequence is that of NADH-ubiquinone oxidoreductase chain 6 (MT-ND6) from Pteropus dasymallus (Ryukyu flying fox).